Here is a 176-residue protein sequence, read N- to C-terminus: ATP-dependent protease subunit HslV (176 aa).

The active site involves Thr2. 3 residues coordinate Na(+): Gly158, Cys161, and Thr164.

Belongs to the peptidase T1B family. HslV subfamily. A double ring-shaped homohexamer of HslV is capped on each side by a ring-shaped HslU homohexamer. The assembly of the HslU/HslV complex is dependent on binding of ATP.

It localises to the cytoplasm. The enzyme catalyses ATP-dependent cleavage of peptide bonds with broad specificity.. Allosterically activated by HslU binding. In terms of biological role, protease subunit of a proteasome-like degradation complex believed to be a general protein degrading machinery. The chain is ATP-dependent protease subunit HslV from Pasteurella multocida (strain Pm70).